The chain runs to 304 residues: Protease HtpX homolog (304 aa).

A run of 2 helical transmembrane segments spans residues 14–34 (VFII…IGII) and 39–59 (YLNG…IMVM). Residue His144 coordinates Zn(2+). Glu145 is a catalytic residue. His148 contributes to the Zn(2+) binding site. A run of 2 helical transmembrane segments spans residues 159-179 (IAIA…RLIF) and 202-222 (IIIY…ATAI). A Zn(2+)-binding site is contributed by Glu231. The segment at 275 to 304 (SSPLKSKKDKPGLFDSHPPISSRIERLENM) is disordered.

Belongs to the peptidase M48B family. Zn(2+) serves as cofactor.

It is found in the cell membrane. In Listeria innocua serovar 6a (strain ATCC BAA-680 / CLIP 11262), this protein is Protease HtpX homolog.